The following is a 203-amino-acid chain: Thymidylate kinase (203 aa).

14 to 21 contacts ATP; sequence GGEGIGKS.

This sequence belongs to the thymidylate kinase family.

The enzyme catalyses dTMP + ATP = dTDP + ADP. Phosphorylation of dTMP to form dTDP in both de novo and salvage pathways of dTTP synthesis. This chain is Thymidylate kinase, found in Rickettsia africae (strain ESF-5).